A 241-amino-acid polypeptide reads, in one-letter code: Ubiquinone biosynthesis O-methyltransferase (241 aa).

S-adenosyl-L-methionine-binding residues include arginine 44, glycine 63, aspartate 84, and methionine 128.

Belongs to the methyltransferase superfamily. UbiG/COQ3 family.

It carries out the reaction a 3-demethylubiquinol + S-adenosyl-L-methionine = a ubiquinol + S-adenosyl-L-homocysteine + H(+). The enzyme catalyses a 3-(all-trans-polyprenyl)benzene-1,2-diol + S-adenosyl-L-methionine = a 2-methoxy-6-(all-trans-polyprenyl)phenol + S-adenosyl-L-homocysteine + H(+). It participates in cofactor biosynthesis; ubiquinone biosynthesis. O-methyltransferase that catalyzes the 2 O-methylation steps in the ubiquinone biosynthetic pathway. This chain is Ubiquinone biosynthesis O-methyltransferase, found in Hydrogenovibrio crunogenus (strain DSM 25203 / XCL-2) (Thiomicrospira crunogena).